We begin with the raw amino-acid sequence, 168 residues long: Lipoprotein signal peptidase (168 aa).

Transmembrane regions (helical) follow at residues Trp12–Ala32, Trp67–Leu87, and Asn93–Ile113. Residues Asp123 and Asp141 contribute to the active site. A helical transmembrane segment spans residues Ala136 to Phe156.

It belongs to the peptidase A8 family.

The protein localises to the cell inner membrane. It catalyses the reaction Release of signal peptides from bacterial membrane prolipoproteins. Hydrolyzes -Xaa-Yaa-Zaa-|-(S,diacylglyceryl)Cys-, in which Xaa is hydrophobic (preferably Leu), and Yaa (Ala or Ser) and Zaa (Gly or Ala) have small, neutral side chains.. Its pathway is protein modification; lipoprotein biosynthesis (signal peptide cleavage). In terms of biological role, this protein specifically catalyzes the removal of signal peptides from prolipoproteins. The sequence is that of Lipoprotein signal peptidase from Shewanella amazonensis (strain ATCC BAA-1098 / SB2B).